The chain runs to 403 residues: Probable protein phosphatase 2C 8 (403 aa).

The segment at 42-80 is disordered; the sequence is LGRTASAVAEDDAAKRVRPASDSSSDSSESAKVAPEPTA. Over residues 62–71 the composition is skewed to low complexity; sequence SDSSSDSSES. One can recognise a PPM-type phosphatase domain in the interval 90–388; it reads SHGAVSVIGR…DNISVVVVEL (299 aa). Mn(2+)-binding residues include aspartate 144, glycine 145, aspartate 325, and aspartate 379.

Belongs to the PP2C family. Requires Mg(2+) as cofactor. Mn(2+) is required as a cofactor.

It catalyses the reaction O-phospho-L-seryl-[protein] + H2O = L-seryl-[protein] + phosphate. The catalysed reaction is O-phospho-L-threonyl-[protein] + H2O = L-threonyl-[protein] + phosphate. This chain is Probable protein phosphatase 2C 8, found in Oryza sativa subsp. japonica (Rice).